Consider the following 94-residue polypeptide: Small ribosomal subunit protein uS19 (94 aa).

It belongs to the universal ribosomal protein uS19 family.

In terms of biological role, protein S19 forms a complex with S13 that binds strongly to the 16S ribosomal RNA. In Wolbachia pipientis wMel, this protein is Small ribosomal subunit protein uS19.